The chain runs to 311 residues: Aspartate carbamoyltransferase catalytic subunit (311 aa).

Carbamoyl phosphate-binding residues include R55 and T56. K85 contributes to the L-aspartate binding site. 3 residues coordinate carbamoyl phosphate: R106, H135, and Q138. The L-aspartate site is built by R168 and R230. The carbamoyl phosphate site is built by L268 and P269.

This sequence belongs to the aspartate/ornithine carbamoyltransferase superfamily. ATCase family. In terms of assembly, heterododecamer (2C3:3R2) of six catalytic PyrB chains organized as two trimers (C3), and six regulatory PyrI chains organized as three dimers (R2).

It carries out the reaction carbamoyl phosphate + L-aspartate = N-carbamoyl-L-aspartate + phosphate + H(+). It functions in the pathway pyrimidine metabolism; UMP biosynthesis via de novo pathway; (S)-dihydroorotate from bicarbonate: step 2/3. In terms of biological role, catalyzes the condensation of carbamoyl phosphate and aspartate to form carbamoyl aspartate and inorganic phosphate, the committed step in the de novo pyrimidine nucleotide biosynthesis pathway. This Pectobacterium atrosepticum (strain SCRI 1043 / ATCC BAA-672) (Erwinia carotovora subsp. atroseptica) protein is Aspartate carbamoyltransferase catalytic subunit.